The chain runs to 1142 residues: Collagen alpha-1(XIX) chain (1142 aa).

The N-terminal stretch at 1–23 (MRLTGPWKLWLWMSIFLLPASTS) is a signal peptide. In terms of domain architecture, Laminin G-like spans 50 to 234 (NKLEVSGFDL…LHQLKIYCSA (185 aa)). Disordered stretches follow at residues 288-680 (IPNK…GDPI), 704-1009 (PGLK…PGIP), and 1053-1142 (YGRP…TGGN). 3 Collagen-like domains span residues 292–349 (GEAG…GEKG), 350–391 (DPAL…ALPG), and 392–433 (SLGI…GIQG). Residues 292-351 (GEAGLPGAPGSPGQKGHKGEPGENGLHGAPGFPGQKGEQGFEGSKGETGEKGEQGEKGDP) are triple-helical region 1 (COL1). Basic and acidic residues predominate over residues 335-350 (SKGETGEKGEQGEKGD). Residues 370-429 (GPPGPKGEKGDTGPPGPPALPGSLGIQGPQGPPGKEGQRGRRGKTGPPGKPGPPGPPGPP) form a triple-helical region 2 (COL2) region. The segment covering 390–404 (PGSLGIQGPQGPPGK) has biased composition (low complexity). Residues 417–429 (PGKPGPPGPPGPP) are compositionally biased toward pro residues. 2 stretches are compositionally biased toward basic and acidic residues: residues 444–463 (KDNK…DKGE) and 478–496 (QKGE…DRGE). Residues 448 to 688 (GNDEHEAGGL…PIALPLLGDI (241 aa)) form a triple-helical region 3 (COL3) region. Collagen-like domains follow at residues 474–516 (GPKG…GPPG), 568–624 (GPPG…GPQG), 626–678 (GIPG…PPGD), 728–778 (KGDI…APGP), 779–814 (TGPP…PPGP), 845–903 (GPPG…VPGE), 904–947 (PGER…GDRG), and 948–1004 (PKGE…GSPG). A compositionally biased stretch (low complexity) spans 640–651 (PGIQGPRGLPGL). The triple-helical region 4 (COL4) stretch occupies residues 700–818 (QASVPGLKSN…PGPPGPPGIP (119 aa)). Composition is skewed to basic and acidic residues over residues 720 to 731 (GKYDSMARKGDI) and 743 to 752 (EGPKGSKGER). 2 stretches are compositionally biased toward pro residues: residues 806-817 (PGKPGPPGPPGI) and 840-852 (YPGP…PKGD). The triple-helical region 5 (COL5) stretch occupies residues 833 to 1012 (GGVNVPSYPG…PGIPGIPADA (180 aa)). Positions 943–954 (PGDRGPKGERGD) are enriched in basic and acidic residues. The Cell attachment site motif lies at 952-954 (RGD). A triple-helical region 6 (COL6) region spans residues 1054 to 1111 (GRPGPPGKDGLPGPPGDPGPQGYRGQKGERGEPGIGLPGSPGLPGTSALGLPGSPGAP). Over residues 1093–1107 (SPGLPGTSALGLPGS) the composition is skewed to low complexity. Over residues 1108-1119 (PGAPGPQGPPGP) the composition is skewed to pro residues.

Belongs to the fibril-associated collagens with interrupted helices (FACIT) family. As to quaternary structure, oligomer; disulfide-linked. In terms of processing, prolines at the third position of the tripeptide repeating unit (G-X-Y) are hydroxylated in some or all of the chains. In terms of tissue distribution, localized to vascular, neuronal, mesenchymal, and some epithelial basement membrane zones in umbilical cord.

The protein localises to the secreted. It is found in the extracellular space. Its subcellular location is the extracellular matrix. May act as a cross-bridge between fibrils and other extracellular matrix molecules. Involved in skeletal myogenesis in the developing esophagus. May play a role in organization of the pericellular matrix or the sphinteric smooth muscle. In Homo sapiens (Human), this protein is Collagen alpha-1(XIX) chain (COL19A1).